The following is a 432-amino-acid chain: Polyamine export protein (432 aa).

Positions 1-201 (MIMELFHTIL…AEAGVLKTQE (201 aa)) constitute a CNNM transmembrane domain. Helical transmembrane passes span 2-22 (IMEL…SAVV), 61-81 (FITV…GIGE), 100-120 (WIAP…FILF), and 138-158 (LSVV…VWFF). CBS domains follow at residues 220-279 (MTTR…NENV) and 286-345 (LLRK…SNEE).

Belongs to the UPF0053 family. PaeA subfamily.

Its subcellular location is the cell inner membrane. In terms of biological role, involved in cadaverine and putrescine tolerance in stationary phase. May facilitate the efflux of both cadaverine and putrescine from the cytoplasm, reducing potentially toxic levels under certain stress conditions. The polypeptide is Polyamine export protein (Haemophilus influenzae (strain ATCC 51907 / DSM 11121 / KW20 / Rd)).